Consider the following 78-residue polypeptide: Beta-defensin 29 (78 aa).

Residues 1-23 form the signal peptide; it reads MPVTKPYFVTVAVLLILVDKTTG. 3 cysteine pairs are disulfide-bonded: Cys-40-Cys-67, Cys-47-Cys-61, and Cys-51-Cys-68.

It belongs to the beta-defensin family.

It localises to the secreted. In terms of biological role, has antibacterial activity. This is Beta-defensin 29 (Defb29) from Rattus norvegicus (Rat).